The following is a 363-amino-acid chain: RNA exonuclease NGL1 (363 aa).

The transit peptide at 1–23 (MFTRRFIPVVQSTKQNIGKYVRK) directs the protein to the mitochondrion.

It belongs to the CCR4/nocturin family.

The protein localises to the mitochondrion. This chain is RNA exonuclease NGL1 (NGL1), found in Saccharomyces cerevisiae (strain ATCC 204508 / S288c) (Baker's yeast).